The sequence spans 679 residues: DNA-directed RNA polymerase subunit beta' (679 aa).

Positions 69, 71, 87, and 90 each coordinate Zn(2+). Mg(2+)-binding residues include Asp489, Asp491, and Asp493.

Belongs to the RNA polymerase beta' chain family. RpoC1 subfamily. In plastids the minimal PEP RNA polymerase catalytic core is composed of four subunits: alpha, beta, beta', and beta''. When a (nuclear-encoded) sigma factor is associated with the core the holoenzyme is formed, which can initiate transcription. Mg(2+) serves as cofactor. It depends on Zn(2+) as a cofactor.

It localises to the plastid. It is found in the chloroplast. It catalyses the reaction RNA(n) + a ribonucleoside 5'-triphosphate = RNA(n+1) + diphosphate. Functionally, DNA-dependent RNA polymerase catalyzes the transcription of DNA into RNA using the four ribonucleoside triphosphates as substrates. In Oenothera argillicola (Appalachian evening primrose), this protein is DNA-directed RNA polymerase subunit beta'.